Reading from the N-terminus, the 350-residue chain is Ketol-acid reductoisomerase (NADP(+)) (350 aa).

The KARI N-terminal Rossmann domain maps to 3–183 (AQIWYEDDGD…GALRAGAIKT (181 aa)). NADP(+) is bound by residues 26 to 29 (YGSQ), arginine 49, serine 52, serine 54, and 84 to 87 (DQYQ). The active site involves histidine 109. Glycine 135 lines the NADP(+) pocket. A KARI C-terminal knotted domain is found at 184–327 (TFKEETETDL…PKLRAMFSWN (144 aa)). The Mg(2+) site is built by aspartate 192, glutamate 196, glutamate 228, and glutamate 232. Serine 253 serves as a coordination point for substrate.

Belongs to the ketol-acid reductoisomerase family. The cofactor is Mg(2+).

The enzyme catalyses (2R)-2,3-dihydroxy-3-methylbutanoate + NADP(+) = (2S)-2-acetolactate + NADPH + H(+). It catalyses the reaction (2R,3R)-2,3-dihydroxy-3-methylpentanoate + NADP(+) = (S)-2-ethyl-2-hydroxy-3-oxobutanoate + NADPH + H(+). It participates in amino-acid biosynthesis; L-isoleucine biosynthesis; L-isoleucine from 2-oxobutanoate: step 2/4. Its pathway is amino-acid biosynthesis; L-valine biosynthesis; L-valine from pyruvate: step 2/4. Its function is as follows. Involved in the biosynthesis of branched-chain amino acids (BCAA). Catalyzes an alkyl-migration followed by a ketol-acid reduction of (S)-2-acetolactate (S2AL) to yield (R)-2,3-dihydroxy-isovalerate. In the isomerase reaction, S2AL is rearranged via a Mg-dependent methyl migration to produce 3-hydroxy-3-methyl-2-ketobutyrate (HMKB). In the reductase reaction, this 2-ketoacid undergoes a metal-dependent reduction by NADPH to yield (R)-2,3-dihydroxy-isovalerate. This Bifidobacterium animalis subsp. lactis (strain AD011) protein is Ketol-acid reductoisomerase (NADP(+)).